The sequence spans 164 residues: Lipoprotein signal peptidase (164 aa).

4 consecutive transmembrane segments (helical) span residues 8-28 (IVAA…LLFV), 39-59 (VTPF…GWFQ), 64-84 (VGAT…AIWM), and 91-111 (LATI…IDRF). Residues Asp118 and Asp140 contribute to the active site. A helical membrane pass occupies residues 131 to 151 (YSWYVFNLADVAIVAGVIALL).

Belongs to the peptidase A8 family.

Its subcellular location is the cell inner membrane. The enzyme catalyses Release of signal peptides from bacterial membrane prolipoproteins. Hydrolyzes -Xaa-Yaa-Zaa-|-(S,diacylglyceryl)Cys-, in which Xaa is hydrophobic (preferably Leu), and Yaa (Ala or Ser) and Zaa (Gly or Ala) have small, neutral side chains.. It participates in protein modification; lipoprotein biosynthesis (signal peptide cleavage). Its function is as follows. This protein specifically catalyzes the removal of signal peptides from prolipoproteins. This chain is Lipoprotein signal peptidase, found in Nitrobacter hamburgensis (strain DSM 10229 / NCIMB 13809 / X14).